Reading from the N-terminus, the 218-residue chain is Probable chemoreceptor glutamine deamidase CheD (218 aa).

This sequence belongs to the CheD family.

The enzyme catalyses L-glutaminyl-[protein] + H2O = L-glutamyl-[protein] + NH4(+). In terms of biological role, probably deamidates glutamine residues to glutamate on methyl-accepting chemotaxis receptors (MCPs), playing an important role in chemotaxis. The sequence is that of Probable chemoreceptor glutamine deamidase CheD from Saccharophagus degradans (strain 2-40 / ATCC 43961 / DSM 17024).